Reading from the N-terminus, the 410-residue chain is Chitinase-3-like protein 1 (410 aa).

The first 48 residues, 1–48 (MGVKAAQTGIWASQGQSIRVVGFQAQTAHRAICLLGFVVLVLLQCCSA), serve as a signal peptide directing secretion. The region spanning 49-410 (YKLVCYYTSW…NAIKDALAAT (362 aa)) is the GH18 domain. A disulfide bridge links cysteine 53 with cysteine 78. An N-linked (GlcNAc...) asparagine glycan is attached at asparagine 87. Residues 97 to 98 (EW), 124 to 127 (GGWN), tyrosine 168, 231 to 234 (MTYD), and arginine 290 each bind chitin. Residues cysteine 327 and cysteine 391 are joined by a disulfide bond. The segment at 351–365 (QWVGYDDQESVKSKV) is important for AKT1 activation and IL8 production. Residue tryptophan 379 coordinates chitin.

The protein belongs to the glycosyl hydrolase 18 family. In terms of assembly, monomer.

Its subcellular location is the secreted. It localises to the extracellular space. The protein localises to the cytoplasm. It is found in the perinuclear region. The protein resides in the endoplasmic reticulum. Functionally, carbohydrate-binding lectin with a preference for chitin. Has no chitinase activity. May play a role in tissue remodeling and in the capacity of cells to respond to and cope with changes in their environment. Plays a role in T-helper cell type 2 (Th2) inflammatory response and IL-13-induced inflammation, regulating allergen sensitization, inflammatory cell apoptosis, dendritic cell accumulation and M2 macrophage differentiation. Facilitates invasion of pathogenic enteric bacteria into colonic mucosa and lymphoid organs. Mediates activation of AKT1 signaling pathway and subsequent IL8 production in colonic epithelial cells. Regulates antibacterial responses in lung by contributing to macrophage bacterial killing, controlling bacterial dissemination and augmenting host tolerance. Also regulates hyperoxia-induced injury, inflammation and epithelial apoptosis in lung. This chain is Chitinase-3-like protein 1 (CHI3L1), found in Pongo abelii (Sumatran orangutan).